The chain runs to 422 residues: Tyrosine--tRNA ligase (422 aa).

Position 34 (Tyr34) interacts with L-tyrosine. The 'HIGH' region motif lies at 39 to 48; it reads PTEDSLHVGH. Residues Tyr172 and Gln176 each contribute to the L-tyrosine site. Residues 232–236 carry the 'KMSKS' region motif; sequence KFGKT. ATP is bound at residue Lys235. The 59-residue stretch at 354–412 folds into the S4 RNA-binding domain; the sequence is KDLQEALVLSSLAQSRTQAKNMIISNSISINTKKIVNKNYIIDDNDKLFNQFTLLSRGK.

The protein belongs to the class-I aminoacyl-tRNA synthetase family. TyrS type 1 subfamily. Homodimer.

It localises to the cytoplasm. The enzyme catalyses tRNA(Tyr) + L-tyrosine + ATP = L-tyrosyl-tRNA(Tyr) + AMP + diphosphate + H(+). Functionally, catalyzes the attachment of tyrosine to tRNA(Tyr) in a two-step reaction: tyrosine is first activated by ATP to form Tyr-AMP and then transferred to the acceptor end of tRNA(Tyr). The polypeptide is Tyrosine--tRNA ligase (Buchnera aphidicola subsp. Schizaphis graminum (strain Sg)).